The following is a 148-amino-acid chain: Flavodoxin (148 aa).

Positions 4-145 (VLILFGSSTG…AVSAFAEDVL (142 aa)) constitute a Flavodoxin-like domain.

Belongs to the flavodoxin family. FMN is required as a cofactor.

Low-potential electron donor to a number of redox enzymes. In Desulfovibrio desulfuricans (strain ATCC 27774 / DSM 6949 / MB), this protein is Flavodoxin.